Consider the following 409-residue polypeptide: SPI-1 type 3 secretion system translocon protein SctB (409 aa).

Residues 119-140 (ISGMSSSAVALLAAANTLMLTL) form a helical membrane-spanning segment.

This sequence belongs to the SctB/SipC family. In terms of assembly, the core secretion machinery of the T3SS is composed of approximately 20 different proteins, including cytoplasmic components, a base, an export apparatus and a needle. This subunit is involved in the formation of a pore, called the translocon, in host membrane.

The protein resides in the secreted. The protein localises to the host membrane. Component of the type III secretion system 1 (SPI-1 T3SS), also called injectisome, which is used to inject bacterial effector proteins into eukaryotic host cells. SipB/SctE1 and SipC/SctB1 are inserted into the host membrane where they form a pore and allow the translocation of effector proteins into the cytosol of target cells. In Salmonella typhimurium (strain 14028s / SGSC 2262), this protein is SPI-1 type 3 secretion system translocon protein SctB.